The primary structure comprises 618 residues: Serine/threonine-protein kinase TNNI3K (618 aa).

The N-myristoyl glycine moiety is linked to residue glycine 2. Residues 21–51 adopt a coiled-coil conformation; that stretch reads SESYVITIERLEDDLKIKEKELTELRNIFGS. ANK repeat units follow at residues 66–96, 100–129, 133–162, 166–195, 199–228, 234–263, 269–298, 304–335, 339–368, and 381–410; these read NGLSLLHLCCICGGNKSHIRTLMLKGLRPSR, NGFTALHLAVYKDNAELITSLLHGGADIQQ, GGLTALHIATIAGHLEAADVLLQHGANVNI, VFFTPLHIAAYYGHEQVTRLLLKFGADVNV, VGDRPLHLASAKGFLNIAKLLMEEGSKADV, EDHVPLHFCSRFGHHDIVKYLLQNDLEVQP, YGDTPLHLACYNGKFEVAKEIIQISGTESL, FSETAFHSACTYGKSIDLVKFLLDQNVININH, DGHTGLHSACYHGHIHLVQFLLDNGADMNL, and DEQTCLMWAYEKGHDAIVTLLKHYKRPQDE. One can recognise a Protein kinase domain in the interval 463-618; the sequence is IEFHEIIGSG…TAHTIYLLAP (156 aa). ATP contacts are provided by residues 469–477 and lysine 490; that span reads IGSGSFGKV. Catalysis depends on aspartate 588, which acts as the Proton acceptor.

Belongs to the protein kinase superfamily. TKL Ser/Thr protein kinase family. MAP kinase kinase kinase subfamily. Interacts with TNNI3, ACTC, ACTA1, MYBPC3, AIP, FABP3 and HADHB. Mg(2+) serves as cofactor. Post-translationally, autophosphorylated.

It is found in the nucleus. It localises to the cytoplasm. It catalyses the reaction L-seryl-[protein] + ATP = O-phospho-L-seryl-[protein] + ADP + H(+). It carries out the reaction L-threonyl-[protein] + ATP = O-phospho-L-threonyl-[protein] + ADP + H(+). Functionally, may play a role in cardiac physiology. In Pongo abelii (Sumatran orangutan), this protein is Serine/threonine-protein kinase TNNI3K.